The sequence spans 196 residues: 7-methyl-GTP pyrophosphatase (196 aa).

Asp69 functions as the Proton acceptor in the catalytic mechanism.

This sequence belongs to the Maf family. YceF subfamily. A divalent metal cation is required as a cofactor.

The protein localises to the cytoplasm. It carries out the reaction N(7)-methyl-GTP + H2O = N(7)-methyl-GMP + diphosphate + H(+). Functionally, nucleoside triphosphate pyrophosphatase that hydrolyzes 7-methyl-GTP (m(7)GTP). May have a dual role in cell division arrest and in preventing the incorporation of modified nucleotides into cellular nucleic acids. The chain is 7-methyl-GTP pyrophosphatase from Photorhabdus laumondii subsp. laumondii (strain DSM 15139 / CIP 105565 / TT01) (Photorhabdus luminescens subsp. laumondii).